Consider the following 54-residue polypeptide: Large ribosomal subunit protein bL33 (54 aa).

The protein belongs to the bacterial ribosomal protein bL33 family.

This Thermus thermophilus (strain ATCC BAA-163 / DSM 7039 / HB27) protein is Large ribosomal subunit protein bL33.